A 186-amino-acid chain; its full sequence is Putative 5'(3')-deoxyribonucleotidase (186 aa).

The active-site Nucleophile is Asp-6. Mg(2+) contacts are provided by Asp-6, Asp-8, and Asp-137. The active-site Proton donor is the Asp-8.

The protein belongs to the 5'(3')-deoxyribonucleotidase family. Mg(2+) is required as a cofactor.

In terms of biological role, dephosphorylates the 5' and 2'(3')-phosphates of deoxyribonucleotides. The protein is Putative 5'(3')-deoxyribonucleotidase of Bordetella pertussis (strain Tohama I / ATCC BAA-589 / NCTC 13251).